A 761-amino-acid polypeptide reads, in one-letter code: Cyclin-D-binding Myb-like transcription factor 1 (761 aa).

The segment at 1–237 (MSTVEEDSDT…TPEEIEKLKE (237 aa)) is interaction with CCND2. The tract at residues 24–51 (DTDGNLILHCPQNDPDEVDSEDSTEPPH) is disordered. Positions 37-47 (DPDEVDSEDST) are enriched in acidic residues. Residues 87 to 170 (VTMTATTEVA…IDILMNNIER (84 aa)) form a required for transcriptional activation region. The tract at residues 87-458 (VTMTATTEVA…DNTAISPSPM (372 aa)) is required for DNA-binding. The tract at residues 176 to 761 (GIKDATEIIF…KDVEDLVNCH (586 aa)) is interaction with CCND1, CCND2 and CCND3. Residues 225–263 (GKYTPEEIEKLKELRIKHGNDWATIGAALGRSASSVKDR) form the Myb-like 1 domain. One can recognise an HTH myb-type domain in the interval 268-333 (KDTCNTGKWT…KWLNYLNWKQ (66 aa)). A DNA-binding region (H-T-H motif) is located at residues 306 to 329 (WAAVAERVGTRSEKQCRSKWLNYL). Residues 339–388 (WTKEDEINLILRIAELDVADENDINWDLLAEGWSSVRSPQWLRSKWWTIK) enclose the Myb-like 2 domain. The required for transcriptional activation stretch occupies residues 459–761 (AALQIPVQIT…KDVEDLVNCH (303 aa)). Disordered stretches follow at residues 584–625 (SLSQ…MTIQ) and 740–761 (GSSL…VNCH).

It belongs to the DMTF1 family. Interacts with the D-type cyclins CCND1, CCND2 and CCND3. Interaction with D-type cyclins may modulate transcriptional activation by this protein. In terms of processing, phosphorylated by the cyclin-D2/CDK4, cyclin-D3/CDK4 and cyclin-D2/CDK6 complexes and to a lesser extent by the cyclin-D1/CDK4 complex. Ubiquitously expressed (at mRNA level). Expressed in brain, intestine, kidney, lung, pancreas, skin, spleen and tongue (at protein level). Expressed at high levels in testis and thymus (at protein level). In all tissues examined, expression is predominant in non-proliferating and differentiated cell types. These include epithelial, interstitial and smooth muscle cells of the intestine, differentiated spermatids, sperm and interstitial cells of the testis, and lymphoid cells of the medullary compartment of the thymus.

The protein localises to the nucleus. Transcriptional activator which activates the CDKN2A/ARF locus in response to Ras-Raf signaling, thereby promoting p53/TP53-dependent growth arrest. May also cooperate with MYB to activate transcription of the ANPEP gene. Binds to the consensus sequence 5'-CCCG[GT]ATGT-3'. This Mus musculus (Mouse) protein is Cyclin-D-binding Myb-like transcription factor 1 (Dmtf1).